The primary structure comprises 308 residues: Lipoyl synthase (308 aa).

[4Fe-4S] cluster-binding residues include Cys-48, Cys-53, Cys-59, Cys-74, Cys-78, Cys-81, and Ser-287. In terms of domain architecture, Radical SAM core spans 60 to 277; that stretch reads WSRHTATYLA…RSVGEALGLF (218 aa).

Belongs to the radical SAM superfamily. Lipoyl synthase family. The cofactor is [4Fe-4S] cluster.

It is found in the cytoplasm. It carries out the reaction [[Fe-S] cluster scaffold protein carrying a second [4Fe-4S](2+) cluster] + N(6)-octanoyl-L-lysyl-[protein] + 2 oxidized [2Fe-2S]-[ferredoxin] + 2 S-adenosyl-L-methionine + 4 H(+) = [[Fe-S] cluster scaffold protein] + N(6)-[(R)-dihydrolipoyl]-L-lysyl-[protein] + 4 Fe(3+) + 2 hydrogen sulfide + 2 5'-deoxyadenosine + 2 L-methionine + 2 reduced [2Fe-2S]-[ferredoxin]. It participates in protein modification; protein lipoylation via endogenous pathway; protein N(6)-(lipoyl)lysine from octanoyl-[acyl-carrier-protein]: step 2/2. Catalyzes the radical-mediated insertion of two sulfur atoms into the C-6 and C-8 positions of the octanoyl moiety bound to the lipoyl domains of lipoate-dependent enzymes, thereby converting the octanoylated domains into lipoylated derivatives. The sequence is that of Lipoyl synthase from Chlamydia muridarum (strain MoPn / Nigg).